The following is a 380-amino-acid chain: Transaldolase (380 aa).

K141 serves as the catalytic Schiff-base intermediate with substrate.

It belongs to the transaldolase family. Type 2 subfamily.

Its subcellular location is the cytoplasm. It carries out the reaction D-sedoheptulose 7-phosphate + D-glyceraldehyde 3-phosphate = D-erythrose 4-phosphate + beta-D-fructose 6-phosphate. Its pathway is carbohydrate degradation; pentose phosphate pathway; D-glyceraldehyde 3-phosphate and beta-D-fructose 6-phosphate from D-ribose 5-phosphate and D-xylulose 5-phosphate (non-oxidative stage): step 2/3. In terms of biological role, transaldolase is important for the balance of metabolites in the pentose-phosphate pathway. The sequence is that of Transaldolase from Trichodesmium erythraeum (strain IMS101).